Reading from the N-terminus, the 348-residue chain is Histidinol-phosphate aminotransferase (348 aa).

An N6-(pyridoxal phosphate)lysine modification is found at Lys207.

The protein belongs to the class-II pyridoxal-phosphate-dependent aminotransferase family. Histidinol-phosphate aminotransferase subfamily. As to quaternary structure, homodimer. The cofactor is pyridoxal 5'-phosphate.

It carries out the reaction L-histidinol phosphate + 2-oxoglutarate = 3-(imidazol-4-yl)-2-oxopropyl phosphate + L-glutamate. It participates in amino-acid biosynthesis; L-histidine biosynthesis; L-histidine from 5-phospho-alpha-D-ribose 1-diphosphate: step 7/9. This chain is Histidinol-phosphate aminotransferase, found in Crocosphaera subtropica (strain ATCC 51142 / BH68) (Cyanothece sp. (strain ATCC 51142)).